Consider the following 122-residue polypeptide: Small ribosomal subunit protein uS13 (122 aa).

Residues 95–122 form a disordered region; sequence GLPVRGQRTHTNARTRKGPAKPIAGKKK.

This sequence belongs to the universal ribosomal protein uS13 family. In terms of assembly, part of the 30S ribosomal subunit. Forms a loose heterodimer with protein S19. Forms two bridges to the 50S subunit in the 70S ribosome.

Its function is as follows. Located at the top of the head of the 30S subunit, it contacts several helices of the 16S rRNA. In the 70S ribosome it contacts the 23S rRNA (bridge B1a) and protein L5 of the 50S subunit (bridge B1b), connecting the 2 subunits; these bridges are implicated in subunit movement. Contacts the tRNAs in the A and P-sites. This is Small ribosomal subunit protein uS13 from Xanthobacter autotrophicus (strain ATCC BAA-1158 / Py2).